Reading from the N-terminus, the 420-residue chain is Melatonin receptor type 1C (420 aa).

Over 1 to 34 (MMEVNSTCLDCRTPGTIRTEQDAQDSASQGLTSA) the chain is Extracellular. Asparagine 5 carries N-linked (GlcNAc...) asparagine glycosylation. The chain crosses the membrane as a helical span at residues 35–55 (LAVVLIFTIVVDVLGNILVIL). The Cytoplasmic portion of the chain corresponds to 56–73 (SVLRNKKLQNAGNLFVVS). A helical membrane pass occupies residues 74–94 (LSIADLVVAVYPYPVILIAIF). Over 95-106 (QNGWTLGNIHCQ) the chain is Extracellular. A disulfide bridge connects residues cysteine 105 and cysteine 182. The chain crosses the membrane as a helical span at residues 107–127 (ISGFLMGLSVIGSVFNITAIA). The Cytoplasmic segment spans residues 128 to 152 (INRYCYICHSLRYDKLYNQRSTWCY). A helical membrane pass occupies residues 153–173 (LGLTWILTIIAIVPNFFVGSL). Residues 174–192 (QYDPRIFSCTFAQTVSSSY) lie on the Extracellular side of the membrane. A helical transmembrane segment spans residues 193-213 (TITVVVVHFIVPLSVVTFCYL). Topologically, residues 214 to 245 (RIWVLVIQVKHRVRQDFKQKLTQTDLRNFLTM) are cytoplasmic. The chain crosses the membrane as a helical span at residues 246–266 (FVVFVLFAVCWAPLNFIGLAV). The Extracellular portion of the chain corresponds to 267 to 279 (AINPFHVAPKIPE). A helical transmembrane segment spans residues 280–303 (WLFVLSYFMAYFNSCLNAVIYGVL). The Cytoplasmic segment spans residues 304–420 (NQNFRKEYKR…ELCKDGISQR (117 aa)).

The protein belongs to the G-protein coupled receptor 1 family. In terms of tissue distribution, moderately expressed in dermal melanophores.

Its subcellular location is the cell membrane. Functionally, high affinity receptor for melatonin. Likely to mediate the potent effects of melatonin on pigment aggregation in melanophores. The activity of this receptor is mediated by pertussis toxin sensitive G proteins that inhibit adenylate cyclase activity. In Xenopus laevis (African clawed frog), this protein is Melatonin receptor type 1C (mtnr1c).